We begin with the raw amino-acid sequence, 199 residues long: Chaperone protein TorD (199 aa).

The protein belongs to the TorD/DmsD family. TorD subfamily.

It is found in the cytoplasm. Functionally, involved in the biogenesis of TorA. Acts on TorA before the insertion of the molybdenum cofactor and, as a result, probably favors a conformation of the apoenzyme that is competent for acquiring the cofactor. This Escherichia coli O139:H28 (strain E24377A / ETEC) protein is Chaperone protein TorD.